A 340-amino-acid polypeptide reads, in one-letter code: Guanine nucleotide-binding protein G(I)/G(S)/G(T) subunit beta-1 (340 aa).

Ser-2 carries the N-acetylserine modification. The residue at position 2 (Ser-2) is a Phosphoserine. WD repeat units lie at residues 46 to 94 (RTRR…HAIP), 95 to 140 (LRSS…RELA), 141 to 181 (GHTG…TTFT), 182 to 223 (GHTG…QTFT), 224 to 267 (GHES…YSHD), 268 to 309 (NIIC…GVLA), and 310 to 340 (GHDN…KIWN). His-266 is modified (phosphohistidine).

It belongs to the WD repeat G protein beta family. G proteins are composed of 3 units, alpha, beta and gamma. The heterodimer formed by GNB1 and GNG2 interacts with ARHGEF5. The heterodimer formed by GNB1 and GNG2 interacts with GRK2. Forms a complex with GNAO1 and GNG3. Interacts with ARHGEF18 and RASD2. Forms complexes with TAS2R14 and G-proteins; these complexes play a role in the perception of bitterness. Component of the TAS2R14-GNAI1 complex, consisting of TAS2R14, GNAI1, GNB1 and GNG2. Component of the TAS2R14-GNAT3 complex, consisting of TAS2R14, GNAT3, GNB1 and GNG2. Component of the TAS2R14-GNAS2 complex, consisting of TAS2R14, GNAS2, GNB1 and GNG2. Post-translationally, phosphorylation at His-266 by NDKB contributes to G protein activation by increasing the high energetic phosphate transfer onto GDP.

In terms of biological role, guanine nucleotide-binding proteins (G proteins) are involved as a modulator or transducer in various transmembrane signaling systems. The beta and gamma chains are required for the GTPase activity, for replacement of GDP by GTP, and for G protein-effector interaction. The protein is Guanine nucleotide-binding protein G(I)/G(S)/G(T) subunit beta-1 (GNB1) of Cricetulus griseus (Chinese hamster).